A 767-amino-acid chain; its full sequence is E3 ubiquitin-protein ligase pub1 (767 aa).

Residues 1–111 (MSNSAQSRRI…AIGGDEMLTR (111 aa)) form the C2 domain. Polar residues predominate over residues 138-158 (LQVPSSAASGARTQRTSITND). Disordered regions lie at residues 138-216 (LQVP…RRTD) and 252-306 (SASS…RPYF). Position 156 is a phosphothreonine (T156). Low complexity predominate over residues 159–176 (PQSSQSSSVSRNPASSRA). S178 bears the Phosphoserine mark. T180 is modified (phosphothreonine). Low complexity predominate over residues 184 to 194 (APAASPASSEP). Residues 211 to 236 (WERRTDNLGRTYYVDHNTRSTTWIRP) enclose the WW 1 domain. A compositionally biased stretch (polar residues) spans 257-286 (NVTEGVQPSSSNAARRTEASVLTSNATTAG). WW domains lie at 294–319 (WEQR…WVDP) and 351–376 (WEMR…WDDP). The HECT domain occupies 463-767 (FLLSHEMFNP…VEETIGFGQE (305 aa)). Catalysis depends on C735, which acts as the Glycyl thioester intermediate.

The protein resides in the membrane. Its subcellular location is the cytoplasm. The enzyme catalyses S-ubiquitinyl-[E2 ubiquitin-conjugating enzyme]-L-cysteine + [acceptor protein]-L-lysine = [E2 ubiquitin-conjugating enzyme]-L-cysteine + N(6)-ubiquitinyl-[acceptor protein]-L-lysine.. It functions in the pathway protein modification; protein ubiquitination. In terms of biological role, E3 ubiquitin-protein ligase which accepts ubiquitin from an E2 ubiquitin-conjugating enzyme in the form of a thioester and then directly transfers the ubiquitin to targeted substrates. Regulates ubiquitination of cdc25. This Schizosaccharomyces pombe (strain 972 / ATCC 24843) (Fission yeast) protein is E3 ubiquitin-protein ligase pub1 (pub1).